A 293-amino-acid polypeptide reads, in one-letter code: 4-hydroxy-tetrahydrodipicolinate synthase (293 aa).

Thr47 contributes to the pyruvate binding site. Tyr135 (proton donor/acceptor) is an active-site residue. Lys163 acts as the Schiff-base intermediate with substrate in catalysis. Ile204 contributes to the pyruvate binding site.

It belongs to the DapA family. In terms of assembly, homotetramer; dimer of dimers.

The protein resides in the cytoplasm. The enzyme catalyses L-aspartate 4-semialdehyde + pyruvate = (2S,4S)-4-hydroxy-2,3,4,5-tetrahydrodipicolinate + H2O + H(+). Its pathway is amino-acid biosynthesis; L-lysine biosynthesis via DAP pathway; (S)-tetrahydrodipicolinate from L-aspartate: step 3/4. In terms of biological role, catalyzes the condensation of (S)-aspartate-beta-semialdehyde [(S)-ASA] and pyruvate to 4-hydroxy-tetrahydrodipicolinate (HTPA). The protein is 4-hydroxy-tetrahydrodipicolinate synthase of Brachyspira hyodysenteriae (strain ATCC 49526 / WA1).